A 1142-amino-acid polypeptide reads, in one-letter code: MFIVHRRFFQNEKAFTPAGKHEKVADGNKHETLATSEYPKVCASNDLYKILQISAPKVGNFTIHDAPVVGLIDSILEYYLYISVKVRKAWIAGYGSQPQNLICFDWERFTGILDQQSLNSPPLAGFVKPDPTSAEPGFLLLWPASGDLFYWERTSLMNVEVSAPEFPGFLHYRIQLKRYESCKNLVSAEPAGFFLTLSSGRLLHLNLKDSDGNSSIQVRILFPGLHIPNCLLSLYNSIFAFTSGRVIPIRCGSIKGPGERLVYSMHSGSTLRIWEIFGTGDHHLLRGFDIYDIILDSIQESFSYVNRFLILDFSVSTSDPYTLACLVSWRDNASLFNYAAIIISFNHQMIPHVSQFCHVRSYLSAILPSVCRIFLPSPGTVVFCVFDVTFAMFHKVRGKEGTFYVEENLVVNNLTSKSRVLDFGMEDAIYEKSTHTLLKTPALILLTEGHGIIRIESSASYLKTSFSATTYLRSRLSQFASQSPLFREQFLLNFDFTYNLSESEVYNTVFNLCDELYTTPCKKNMSVLETLHSQQRDLMEIVLVAFKYLHLSPSNRLQLWLKVAYCSALADLYELLMCNEKMSNLLRRVLKIMSSNDNIDELFLKKCLNINLLLQHLSSEYSQISGQDASNAQKRIEVIVNVNNVYGTIFGNELAYRQEKISKFTDPSSVIRSDLWTVEVDHLDLLRKQIEDSISLHRDVRDSKDAHILKVSNKLRKQILHLVEQNCLLIFDLHNGTDDTIVKSHNFQKFEEEFGNSRKEWLQYLASVGYLEKAIDLAEKVKDFQTMVILLDCLDPKDPTIKLQKQKACLNKYKEEFADVIFFYLVDTEQYASLLHDFLEYQSLLISFFEANDLLNLLWIFEAQNGNYGRASEILFRDCEPEENRIIGKISQLALAKLYSWTNRIEGENIILSNETEVIENHLAILLIQEQYAEMLSSLVDITEDEGEAVEAIVTSNCVNLSENSIRAWLVSSAVERLIQNEYTTLCEMVDFFSSFSLRECSFKEVDLALELLERATITKDVYFYLKDLVYRRFLLQVNWAEIIDAHEDLESSFFPMVKEIMLESDFLIWLQHMEHNIHDESKHYLKSEKNFLQSVYSSLSESQVEDYQMELFREKQIFSVLCKDRELYILIPKLLDVATKQ.

The protein belongs to the nucleoporin Nup133 family. Component of the npc107-120 complex which consists of nup85, nup107, nup120, nup131, nup132 and seh1. Interacts with nup107.

The protein localises to the nucleus. In terms of biological role, functions as a component of the nuclear pore complex (NPC). NPC components, collectively referred to as nucleoporins (NUPs), can play the role of both NPC structural components and of docking or interaction partners for transiently associated nuclear transport factors. Active directional transport is assured by both, a Phe-Gly (FG) repeat affinity gradient for these transport factors across the NPC and a transport cofactor concentration gradient across the nuclear envelope. This Schizosaccharomyces pombe (strain 972 / ATCC 24843) (Fission yeast) protein is Nucleoporin nup131 (nup131).